Here is a 541-residue protein sequence, read N- to C-terminus: Chaperonin GroEL 2 (541 aa).

Residues 29 to 32, 86 to 90, Gly-413, and Asp-492 contribute to the ATP site; these read TLGP and DGTTT.

The protein belongs to the chaperonin (HSP60) family. As to quaternary structure, forms a cylinder of 14 subunits composed of two heptameric rings stacked back-to-back. Interacts with the co-chaperonin GroES.

It localises to the cytoplasm. It carries out the reaction ATP + H2O + a folded polypeptide = ADP + phosphate + an unfolded polypeptide.. Its function is as follows. Together with its co-chaperonin GroES, plays an essential role in assisting protein folding. The GroEL-GroES system forms a nano-cage that allows encapsulation of the non-native substrate proteins and provides a physical environment optimized to promote and accelerate protein folding. The chain is Chaperonin GroEL 2 from Nocardia farcinica (strain IFM 10152).